The chain runs to 410 residues: Bifunctional malic/malolactic enzyme (410 aa).

Y36 functions as the Proton donor in the catalytic mechanism. Catalysis depends on K91, which acts as the Proton acceptor. 3 residues coordinate a divalent metal cation: E133, D134, and D159. Residues 192–195 (AGAA), N286, and N317 contribute to the NADP(+) site.

This sequence belongs to the malic enzymes family. In terms of assembly, interacts with BrxC. It depends on Mg(2+) as a cofactor. Mn(2+) serves as cofactor.

The catalysed reaction is (S)-malate + NADP(+) = pyruvate + CO2 + NADPH. It carries out the reaction oxaloacetate + H(+) = pyruvate + CO2. The enzyme catalyses (S)-malate + H(+) = (S)-lactate + CO2. NADPH is a strong modulator that switches activity from a pyruvate-producing malic enzyme to a lactate-generating malolactic enzyme. Bifunctional enzyme with both malic and malolactic enzyme activities. In the absence of NADPH, catalyzes the reversible decarboxylation of malate to pyruvate. Can use NAD and NADP, but with a very strong preference for NADP. In the presence of excess NADPH, catalyzes the non-oxidative decarboxylation of malate to lactate. During growth on glucose, contributes to NADPH balancing via oxidation of the NADPH produced in excess by other enzymatic reactions. Can also catalyze the decarboxylation of oxaloacetate. The protein is Bifunctional malic/malolactic enzyme (ytsJ) of Bacillus subtilis (strain 168).